Consider the following 388-residue polypeptide: Zinc finger protein ubi-d4 A (388 aa).

The interval 60–190 (GPGSAPGQLY…AKGKGIGSAR (131 aa)) is disordered. Composition is skewed to basic and acidic residues over residues 97 to 107 (PDPEQMLKKEG) and 123 to 137 (DPIE…RDDD). Acidic residues predominate over residues 156 to 170 (PDDFLDDLDDEDYEE). The C2H2-type zinc-finger motif lies at 205-228 (YACDICGKRYKNRPGLSYHYAHSH). Residues 233–264 (EGAGAEDKEDSQPPTPIMHRPEEQKSKKGPDG) form a disordered region. Over residues 251–262 (HRPEEQKSKKGP) the composition is skewed to basic and acidic residues. PHD-type zinc fingers lie at residues 269 to 329 (NNYC…CKCC) and 326 to 376 (CKCC…CLDL).

It belongs to the requiem/DPF family.

Its subcellular location is the cytoplasm. The protein resides in the nucleus. In terms of biological role, may be a transcription factor required for the apoptosis response following survival factor withdrawal from myeloid cells. Might also have a role in the development and maturation of lymphoid cells. The sequence is that of Zinc finger protein ubi-d4 A (req-a) from Xenopus laevis (African clawed frog).